We begin with the raw amino-acid sequence, 261 residues long: Imidazole glycerol phosphate synthase subunit HisF (261 aa).

Active-site residues include Asp-12 and Asp-131.

The protein belongs to the HisA/HisF family. Heterodimer of HisH and HisF.

The protein resides in the cytoplasm. It carries out the reaction 5-[(5-phospho-1-deoxy-D-ribulos-1-ylimino)methylamino]-1-(5-phospho-beta-D-ribosyl)imidazole-4-carboxamide + L-glutamine = D-erythro-1-(imidazol-4-yl)glycerol 3-phosphate + 5-amino-1-(5-phospho-beta-D-ribosyl)imidazole-4-carboxamide + L-glutamate + H(+). Its pathway is amino-acid biosynthesis; L-histidine biosynthesis; L-histidine from 5-phospho-alpha-D-ribose 1-diphosphate: step 5/9. Its function is as follows. IGPS catalyzes the conversion of PRFAR and glutamine to IGP, AICAR and glutamate. The HisF subunit catalyzes the cyclization activity that produces IGP and AICAR from PRFAR using the ammonia provided by the HisH subunit. This Brucella anthropi (strain ATCC 49188 / DSM 6882 / CCUG 24695 / JCM 21032 / LMG 3331 / NBRC 15819 / NCTC 12168 / Alc 37) (Ochrobactrum anthropi) protein is Imidazole glycerol phosphate synthase subunit HisF.